The following is a 690-amino-acid chain: Glycine--tRNA ligase beta subunit (690 aa).

Belongs to the class-II aminoacyl-tRNA synthetase family. Tetramer of two alpha and two beta subunits.

It localises to the cytoplasm. The enzyme catalyses tRNA(Gly) + glycine + ATP = glycyl-tRNA(Gly) + AMP + diphosphate. This is Glycine--tRNA ligase beta subunit from Pediococcus pentosaceus (strain ATCC 25745 / CCUG 21536 / LMG 10740 / 183-1w).